A 442-amino-acid polypeptide reads, in one-letter code: tRNA modification GTPase MnmE (442 aa).

(6S)-5-formyl-5,6,7,8-tetrahydrofolate is bound by residues arginine 27, glutamate 84, and lysine 124. In terms of domain architecture, TrmE-type G spans 221–366 (GLHVVIVGAP…LLDALQAFAE (146 aa)). GTP contacts are provided by residues 231 to 236 (NAGKSS), 250 to 256 (SKEAGTT), and 275 to 278 (DTAG). Residues serine 235 and threonine 256 each contribute to the Mg(2+) site. Lysine 442 contacts (6S)-5-formyl-5,6,7,8-tetrahydrofolate.

Belongs to the TRAFAC class TrmE-Era-EngA-EngB-Septin-like GTPase superfamily. TrmE GTPase family. In terms of assembly, homodimer. Heterotetramer of two MnmE and two MnmG subunits. K(+) serves as cofactor.

The protein resides in the cytoplasm. Functionally, exhibits a very high intrinsic GTPase hydrolysis rate. Involved in the addition of a carboxymethylaminomethyl (cmnm) group at the wobble position (U34) of certain tRNAs, forming tRNA-cmnm(5)s(2)U34. The sequence is that of tRNA modification GTPase MnmE from Brucella suis biovar 1 (strain 1330).